Consider the following 547-residue polypeptide: Isoflavonoid 7-O-beta-apiosyl-glucoside beta-glycosidase (547 aa).

A signal peptide spans 1–31 (MHAMTFKAILLLGLLALVSTSASIAFAKEVR). Residue Gln-59 participates in a beta-D-glucoside binding. N-linked (GlcNAc...) asparagine glycosylation is found at Asn-72 and Asn-132. His-159 is a binding site for a beta-D-glucoside. An N-linked (GlcNAc...) asparagine glycan is attached at Asn-175. Position 204-205 (204-205 (NE)) interacts with a beta-D-glucoside. Catalysis depends on Glu-205, which acts as the Proton donor. Cys-224 and Cys-232 form a disulfide bridge. Asn-285 carries an N-linked (GlcNAc...) asparagine glycan. Residues Tyr-348, Glu-419, Trp-468, 475–476 (EW), and Phe-484 contribute to the a beta-D-glucoside site. Glu-419 (nucleophile) is an active-site residue. Asn-490 carries N-linked (GlcNAc...) asparagine glycosylation.

This sequence belongs to the glycosyl hydrolase 1 family. As to quaternary structure, homotetramer.

It catalyses the reaction 7-[beta-D-apiofuranosyl-(1-&gt;6)-beta-D-glucopyranosyloxy]isoflavonoid + H2O = a 7-hydroxyisoflavonoid + beta-D-apiofuranosyl-(1-&gt;6)-D-glucose.. Not inhibited by iron, calcium, mercury, manganese, zinc or EDTA. In terms of biological role, hydrolyzes dalpatein 7-O-beta-D-apiofuranosyl-(1-&gt;6)-beta-D-glucopyranoside and dalnigrein 7-O-beta-D-apiofuranosyl-(1-&gt;6)-beta-D-glucopyranoside. Also has activity towards pNP-beta-D-fucoside and pNP-beta-D-glucoside, but not pNP-beta-cellobioside. In Dalbergia nigrescens (Thai blackwood), this protein is Isoflavonoid 7-O-beta-apiosyl-glucoside beta-glycosidase.